Consider the following 225-residue polypeptide: ATP-dependent Clp protease proteolytic subunit (225 aa).

S123 acts as the Nucleophile in catalysis. H148 is a catalytic residue.

The protein belongs to the peptidase S14 family. Fourteen ClpP subunits assemble into 2 heptameric rings which stack back to back to give a disk-like structure with a central cavity, resembling the structure of eukaryotic proteasomes.

It localises to the cytoplasm. It catalyses the reaction Hydrolysis of proteins to small peptides in the presence of ATP and magnesium. alpha-casein is the usual test substrate. In the absence of ATP, only oligopeptides shorter than five residues are hydrolyzed (such as succinyl-Leu-Tyr-|-NHMec, and Leu-Tyr-Leu-|-Tyr-Trp, in which cleavage of the -Tyr-|-Leu- and -Tyr-|-Trp bonds also occurs).. In terms of biological role, cleaves peptides in various proteins in a process that requires ATP hydrolysis. Has a chymotrypsin-like activity. Plays a major role in the degradation of misfolded proteins. The polypeptide is ATP-dependent Clp protease proteolytic subunit (Chlorobium phaeovibrioides (strain DSM 265 / 1930) (Prosthecochloris vibrioformis (strain DSM 265))).